The following is a 552-amino-acid chain: Glutamyl-tRNA reductase 1, chloroplastic (552 aa).

Residues 150-153 (TCNR), Ser-210, 215-217 (EGQ), and Gln-221 each bind substrate. Cys-151 serves as the catalytic Nucleophile. 292 to 297 (GAGKMG) is a binding site for NADP(+).

The protein belongs to the glutamyl-tRNA reductase family. Primarily in cotyledons and hypocotyls of greening cucumber seedlings.

It is found in the plastid. The protein localises to the chloroplast. It carries out the reaction (S)-4-amino-5-oxopentanoate + tRNA(Glu) + NADP(+) = L-glutamyl-tRNA(Glu) + NADPH + H(+). The protein operates within porphyrin-containing compound metabolism; protoporphyrin-IX biosynthesis; 5-aminolevulinate from L-glutamyl-tRNA(Glu): step 1/2. Its function is as follows. Catalyzes the NADPH-dependent reduction of glutamyl-tRNA(Glu) to glutamate 1-semialdehyde (GSA). This is Glutamyl-tRNA reductase 1, chloroplastic (HEMA1) from Cucumis sativus (Cucumber).